The chain runs to 609 residues: Zinc metalloproteinase-disintegrin-like (609 aa).

An N-terminal signal peptide occupies residues 1 to 20 (MIQVLLVTICLAALPYQGSS). The propeptide occupies 21–189 (IILESGNVND…KKASQLVVTA (169 aa)). Residues 198–393 (RFVELVLVVD…QNPECIVNEP (196 aa)) enclose the Peptidase M12B domain. Ca(2+) is bound by residues E201 and D285. Intrachain disulfides connect C308–C388, C348–C372, and C350–C355. Residue H333 participates in Zn(2+) binding. The active site involves E334. Residues H337 and H343 each coordinate Zn(2+). The N-linked (GlcNAc...) asparagine glycan is linked to N371. Ca(2+)-binding residues include C388, N391, V403, N406, L408, E410, E413, and D416. A Disintegrin domain is found at 401–487 (PPVCGNELLE…ECPADVFHKN (87 aa)). Disulfide bonds link C404/C433, C415/C428, C417/C423, C427/C450, C441/C447, C446/C472, C459/C479, C466/C498, C491/C503, C510/C560, C525/C571, C538/C548, C555/C597, and C591/C602. Positions 465–467 (ECD) match the D/ECD-tripeptide motif. Ca(2+)-binding residues include D467, P468, E470, D482, and V483.

This sequence belongs to the venom metalloproteinase (M12B) family. P-III subfamily. P-IIIa sub-subfamily. In terms of assembly, monomer. Zn(2+) serves as cofactor. As to expression, expressed by the venom gland.

The protein resides in the secreted. Its function is as follows. This protein is a zinc metalloprotease from snake venom that possesses hemorrhagic activity. The sequence is that of Zinc metalloproteinase-disintegrin-like from Crotalus durissus durissus (Central American rattlesnake).